The chain runs to 203 residues: ATP-dependent Clp protease proteolytic subunit (203 aa).

Ser-103 serves as the catalytic Nucleophile. His-128 is a catalytic residue.

The protein belongs to the peptidase S14 family. Fourteen ClpP subunits assemble into 2 heptameric rings which stack back to back to give a disk-like structure with a central cavity, resembling the structure of eukaryotic proteasomes.

It localises to the cytoplasm. The catalysed reaction is Hydrolysis of proteins to small peptides in the presence of ATP and magnesium. alpha-casein is the usual test substrate. In the absence of ATP, only oligopeptides shorter than five residues are hydrolyzed (such as succinyl-Leu-Tyr-|-NHMec, and Leu-Tyr-Leu-|-Tyr-Trp, in which cleavage of the -Tyr-|-Leu- and -Tyr-|-Trp bonds also occurs).. Functionally, cleaves peptides in various proteins in a process that requires ATP hydrolysis. Has a chymotrypsin-like activity. Plays a major role in the degradation of misfolded proteins. The protein is ATP-dependent Clp protease proteolytic subunit of Dichelobacter nodosus (strain VCS1703A).